Here is a 281-residue protein sequence, read N- to C-terminus: Probable endonuclease 4 (281 aa).

Zn(2+)-binding residues include His-69, His-109, Glu-145, Asp-179, His-182, His-216, Asp-229, His-231, and Glu-261.

The protein belongs to the AP endonuclease 2 family. Requires Zn(2+) as cofactor.

The enzyme catalyses Endonucleolytic cleavage to 5'-phosphooligonucleotide end-products.. Its function is as follows. Endonuclease IV plays a role in DNA repair. It cleaves phosphodiester bonds at apurinic or apyrimidinic (AP) sites, generating a 3'-hydroxyl group and a 5'-terminal sugar phosphate. This chain is Probable endonuclease 4, found in Proteus mirabilis (strain HI4320).